A 249-amino-acid polypeptide reads, in one-letter code: ATP synthase subunit a, chloroplastic (249 aa).

The next 5 membrane-spanning stretches (helical) occupy residues 40 to 60 (QVLI…VLAI), 97 to 117 (VPFI…GALL), 136 to 156 (INTT…AGLS), 201 to 221 (LVVV…VMFL), and 222 to 242 (GLFT…AYIG).

The protein belongs to the ATPase A chain family. In terms of assembly, F-type ATPases have 2 components, CF(1) - the catalytic core - and CF(0) - the membrane proton channel. CF(1) has five subunits: alpha(3), beta(3), gamma(1), delta(1), epsilon(1). CF(0) has four main subunits: a, b, b' and c.

It is found in the plastid. The protein localises to the chloroplast thylakoid membrane. Functionally, key component of the proton channel; it plays a direct role in the translocation of protons across the membrane. This Olimarabidopsis pumila (Dwarf rocket) protein is ATP synthase subunit a, chloroplastic.